A 268-amino-acid chain; its full sequence is NADH-quinone oxidoreductase subunit B 2 (268 aa).

[4Fe-4S] cluster contacts are provided by Cys-42, Cys-43, Cys-108, and Cys-138. The interval 237–268 is disordered; sequence SPNKAKGVAPEIRHNDLKRPAVEVDHARDEQR. Basic and acidic residues predominate over residues 247 to 268; the sequence is EIRHNDLKRPAVEVDHARDEQR.

The protein belongs to the complex I 20 kDa subunit family. As to quaternary structure, NDH-1 is composed of 14 different subunits. Subunits NuoB, C, D, E, F, and G constitute the peripheral sector of the complex. [4Fe-4S] cluster is required as a cofactor.

Its subcellular location is the cell membrane. The catalysed reaction is a quinone + NADH + 5 H(+)(in) = a quinol + NAD(+) + 4 H(+)(out). Functionally, NDH-1 shuttles electrons from NADH, via FMN and iron-sulfur (Fe-S) centers, to quinones in the respiratory chain. The immediate electron acceptor for the enzyme in this species is believed to be ubiquinone. Couples the redox reaction to proton translocation (for every two electrons transferred, four hydrogen ions are translocated across the cytoplasmic membrane), and thus conserves the redox energy in a proton gradient. This Roseiflexus castenholzii (strain DSM 13941 / HLO8) protein is NADH-quinone oxidoreductase subunit B 2.